We begin with the raw amino-acid sequence, 243 residues long: Small ribosomal subunit protein uS3 (243 aa).

One can recognise a KH type-2 domain in the interval 39–110 (IRTFIEKKYG…QVRINVVEVE (72 aa)). The tract at residues 216–243 (QTIPVGANPKRKASRRPQQFEDRSNENS) is disordered. The span at 233–243 (QQFEDRSNENS) shows a compositional bias: basic and acidic residues.

This sequence belongs to the universal ribosomal protein uS3 family. As to quaternary structure, part of the 30S ribosomal subunit. Forms a tight complex with proteins S10 and S14.

Its function is as follows. Binds the lower part of the 30S subunit head. Binds mRNA in the 70S ribosome, positioning it for translation. This Prochlorococcus marinus (strain MIT 9215) protein is Small ribosomal subunit protein uS3.